We begin with the raw amino-acid sequence, 315 residues long: Glutamyl-Q tRNA(Asp) synthetase (315 aa).

L-glutamate is bound by residues 21–25 and E63; that span reads RFAPS. Residues 24-34 carry the 'HIGH' region motif; that stretch reads PSPSGLLHFGS. Zn(2+) is bound by residues C119, C121, Y133, and C137. L-glutamate is bound by residues Y190 and R208. A 'KMSKS' region motif is present at residues 251 to 255; that stretch reads KLSKQ. Residue K254 coordinates ATP.

This sequence belongs to the class-I aminoacyl-tRNA synthetase family. GluQ subfamily. Zn(2+) is required as a cofactor.

Its function is as follows. Catalyzes the tRNA-independent activation of glutamate in presence of ATP and the subsequent transfer of glutamate onto a tRNA(Asp). Glutamate is transferred on the 2-amino-5-(4,5-dihydroxy-2-cyclopenten-1-yl) moiety of the queuosine in the wobble position of the QUC anticodon. The chain is Glutamyl-Q tRNA(Asp) synthetase from Colwellia psychrerythraea (strain 34H / ATCC BAA-681) (Vibrio psychroerythus).